A 505-amino-acid polypeptide reads, in one-letter code: ATP synthase subunit alpha (505 aa).

170 to 177 contributes to the ATP binding site; it reads GDRQTGKT.

Belongs to the ATPase alpha/beta chains family. In terms of assembly, F-type ATPases have 2 components, CF(1) - the catalytic core - and CF(0) - the membrane proton channel. CF(1) has five subunits: alpha(3), beta(3), gamma(1), delta(1), epsilon(1). CF(0) has four main subunits: a(1), b(1), b'(1) and c(9-12).

The protein resides in the cellular thylakoid membrane. It carries out the reaction ATP + H2O + 4 H(+)(in) = ADP + phosphate + 5 H(+)(out). Its function is as follows. Produces ATP from ADP in the presence of a proton gradient across the membrane. The alpha chain is a regulatory subunit. The protein is ATP synthase subunit alpha of Prochlorococcus marinus (strain MIT 9313).